Here is a 447-residue protein sequence, read N- to C-terminus: GTPase Der (447 aa).

EngA-type G domains follow at residues 3-167 (PVIA…HLAD) and 180-353 (IRLA…ASAN). Residues 9 to 16 (GRPNVGKS), 56 to 60 (DTGGF), 119 to 122 (NKAE), 186 to 193 (GRPNVGKS), 233 to 237 (DTAGL), and 298 to 301 (NKWD) each bind GTP. Residues 354 to 438 (RKMSTPVLTR…PMRIQMKSSH (85 aa)) enclose the KH-like domain.

The protein belongs to the TRAFAC class TrmE-Era-EngA-EngB-Septin-like GTPase superfamily. EngA (Der) GTPase family. In terms of assembly, associates with the 50S ribosomal subunit.

Functionally, GTPase that plays an essential role in the late steps of ribosome biogenesis. This Polaromonas sp. (strain JS666 / ATCC BAA-500) protein is GTPase Der.